The primary structure comprises 221 residues: Cyclin-U3-1 (221 aa).

Belongs to the cyclin family. Cyclin U/P subfamily. As to quaternary structure, interacts with CDKA-1 and CDKB1-1. Expressed in roots, stems and flowers. Expressed in the shoot apex, leaf primordia and young leaves.

The polypeptide is Cyclin-U3-1 (CYCU3-1) (Arabidopsis thaliana (Mouse-ear cress)).